The sequence spans 364 residues: Aminomethyltransferase (364 aa).

Belongs to the GcvT family. The glycine cleavage system is composed of four proteins: P, T, L and H.

It carries out the reaction N(6)-[(R)-S(8)-aminomethyldihydrolipoyl]-L-lysyl-[protein] + (6S)-5,6,7,8-tetrahydrofolate = N(6)-[(R)-dihydrolipoyl]-L-lysyl-[protein] + (6R)-5,10-methylene-5,6,7,8-tetrahydrofolate + NH4(+). The glycine cleavage system catalyzes the degradation of glycine. This Escherichia coli (strain 55989 / EAEC) protein is Aminomethyltransferase.